The primary structure comprises 133 residues: Ribonuclease VapC17 (133 aa).

2 residues coordinate Mg(2+): aspartate 7 and aspartate 93. The region spanning 30–118 is the PINc domain; the sequence is AICDIGELEW…HHDRDYKRIA (89 aa).

Belongs to the PINc/VapC protein family. Mg(2+) is required as a cofactor.

Functionally, toxic component of a type II toxin-antitoxin (TA) system. An RNase. The cognate antitoxin is VapB17. The sequence is that of Ribonuclease VapC17 from Mycobacterium tuberculosis (strain CDC 1551 / Oshkosh).